The primary structure comprises 80 residues: Cortexin-3 (80 aa).

Residues 28–48 traverse the membrane as a helical segment; the sequence is TTFVFVILLFIFLGILIVRCF.

The protein belongs to the cortexin family.

It localises to the membrane. The protein is Cortexin-3 (Ctxn3) of Mus musculus (Mouse).